We begin with the raw amino-acid sequence, 356 residues long: Malate dehydrogenase, glyoxysomal (356 aa).

Residues 1-36 (MQPIPDVNQRIARISAHLHPPKYQMEESSVLRRANC) constitute a glyoxysome transit peptide. Residues 51 to 57 (GAAGGIG) and Asp-77 each bind NAD(+). The substrate site is built by Arg-124 and Arg-130. NAD(+) contacts are provided by residues Asn-137 and 160–162 (ISN). Positions 162 and 196 each coordinate substrate. Catalysis depends on His-220, which acts as the Proton acceptor. Met-271 contacts NAD(+).

The protein belongs to the LDH/MDH superfamily. MDH type 1 family. As to quaternary structure, homodimer.

It localises to the glyoxysome. It catalyses the reaction (S)-malate + NAD(+) = oxaloacetate + NADH + H(+). This chain is Malate dehydrogenase, glyoxysomal (MDHG), found in Cucumis sativus (Cucumber).